The chain runs to 259 residues: Type III pantothenate kinase (259 aa).

6–13 (DVGNTNCT) serves as a coordination point for ATP. Substrate is bound at residue 107-110 (GSDR). Asp-109 acts as the Proton acceptor in catalysis. Position 129 (Asp-129) interacts with K(+). Thr-132 lines the ATP pocket. Thr-184 lines the substrate pocket.

Belongs to the type III pantothenate kinase family. Homodimer. NH4(+) serves as cofactor. K(+) is required as a cofactor.

Its subcellular location is the cytoplasm. The catalysed reaction is (R)-pantothenate + ATP = (R)-4'-phosphopantothenate + ADP + H(+). Its pathway is cofactor biosynthesis; coenzyme A biosynthesis; CoA from (R)-pantothenate: step 1/5. Catalyzes the phosphorylation of pantothenate (Pan), the first step in CoA biosynthesis. The protein is Type III pantothenate kinase of Listeria monocytogenes serovar 1/2a (strain ATCC BAA-679 / EGD-e).